Reading from the N-terminus, the 310-residue chain is Serine/threonine-protein kinase pim-2 (310 aa).

A Protein kinase domain is found at tyrosine 30–methionine 290. ATP-binding positions include leucine 36 to valine 44 and lysine 59. Aspartate 167 acts as the Proton acceptor in catalysis.

Belongs to the protein kinase superfamily. CAMK Ser/Thr protein kinase family. PIM subfamily. Autophosphorylated.

The enzyme catalyses L-seryl-[protein] + ATP = O-phospho-L-seryl-[protein] + ADP + H(+). The catalysed reaction is L-threonyl-[protein] + ATP = O-phospho-L-threonyl-[protein] + ADP + H(+). Functionally, proto-oncogene with serine/threonine kinase activity involved in cell survival and cell proliferation. The chain is Serine/threonine-protein kinase pim-2 (pim2) from Danio rerio (Zebrafish).